Reading from the N-terminus, the 113-residue chain is Large ribosomal subunit protein P1 (113 aa).

Positions 56-66 (TAAAAPAPAAG) are enriched in low complexity. Positions 56-113 (TAAAAPAPAAGGSAGGEVEAADDDDEEDAEEEAADEGGDDDGDDDEEADGEGLGALFG) are disordered. The span at 74 to 105 (EAADDDDEEDAEEEAADEGGDDDGDDDEEADG) shows a compositional bias: acidic residues.

It belongs to the eukaryotic ribosomal protein P1/P2 family. Part of the 50S ribosomal subunit. Homodimer, it forms part of the ribosomal stalk which helps the ribosome interact with GTP-bound translation factors. Forms a heptameric uL10/P0(P1)2(P1)2(P1)2 complex, where uL10/P0 forms an elongated spine to which the P1 dimers bind in a sequential fashion.

Forms part of the ribosomal stalk, playing a central role in the interaction of the ribosome with GTP-bound translation factors. This chain is Large ribosomal subunit protein P1, found in Haloferax volcanii (strain ATCC 29605 / DSM 3757 / JCM 8879 / NBRC 14742 / NCIMB 2012 / VKM B-1768 / DS2) (Halobacterium volcanii).